We begin with the raw amino-acid sequence, 498 residues long: MASNTVYTSLIGLLVALTVRSIYRVYFHPLRKIPGPKIAAITHLYQHYYDAVKGGKYIWKLDELHRKYGPIVRFNPNEVHIQDSHYYHHIYAGGAKKQDKDPGFPAVPLFPGVTVTTIKHNHHRLRRGIIKSFFSKQYVTGLEHVIQSKVNLLASRFTEAYRHGTVLDLKYVFAALTSDLTTHYVYGTNLNHLAEPDFKNDFLAGMDSVGPWIPVLLVFGRLLKLARYLPACLVPAGEFLHLWTLSERRVGEILDSQDNGTMGDQKTLLQAMATADVSEEEKTATRLQMETLNIIAGGTETTARALAVGVFHLAHKPSLLLQLRDELRTVMPFPDSSASWTQLEQLPYLAGVVNESLRLSFGFIIRSARVYPNDPLVYEDLVIPPGTPISQSAYFVCMDPSIFPQPEDFNPDRWVQAAREGNNLHRYLIVFSKGSRHCLGINFALAEIYLAIATIARRFDLVPYQTTVEQLQMKRDLGFAAPEKGPFTVRAKVTGLAD.

The helical transmembrane segment at 5 to 27 (TVYTSLIGLLVALTVRSIYRVYF) threads the bilayer. N-linked (GlcNAc...) asparagine glycosylation is found at N259 and N354. C438 is a heme binding site.

Belongs to the cytochrome P450 family. Requires heme as cofactor.

Its subcellular location is the membrane. It participates in mycotoxin biosynthesis; aflatoxin biosynthesis. Functionally, cytochrome P450 monooxygenase; part of the gene cluster that mediates the biosynthesis of aflatoxins, a group of polyketide-derived furanocoumarins, and part of the most toxic and carcinogenic compounds among the known mycotoxins. The four major aflatoxins produced by A.parasiticus are aflatoxin B1 (AFB1), aflatoxin B2 (AFB2), aflatoxin G1 (AFG1) and aflatoxin G2 (AFG2). Within the aflatoxin pathway, the cytochrome P450 monooxygenase aflU is involved in the last steps in which OMST is converted to aflatoxins B1 and G1, and DHOMST to aflatoxins B2 and G2. The biosynthesis of aflatoxins begins with the norsolorinic acid synthase aflC that combines a hexanoyl starter unit produced by the fatty acid synthase aflA/aflB and 7 malonyl-CoA extender units to synthesize the precursor NOR. The second step is the conversion of NOR to averantin and requires the norsolorinic acid ketoreductase aflD, which catalyzes the dehydration of norsolorinic acid to form (1'S)-averantin. The norsolorinic acid reductases aflE and aflF may also play a role in the conversion of NOR to AVN. The cytochrome P450 monooxygenase aflG then catalyzes the hydroxylation of AVN to 5'hydroxyaverantin (HAVN). The next step is performed by the 5'-hydroxyaverantin dehydrogenase aflH that transforms HAVN to 5'-oxoaverantin (OAVN) which is further converted to averufin (AVF) by aflK that plays a dual role in the pathway, as a 5'-oxoaverantin cyclase that mediates conversion of 5'-oxoaverantin, as well as a versicolorin B synthase in a later step in the pathway. The averufin oxidase aflI catalyzes the conversion of AVF to versiconal hemiacetal acetate (VHA). VHA is then the substrate for the versiconal hemiacetal acetate esterase aflJ to yield versiconal (VAL). Versicolorin B synthase aflK then converts VAL to versicolorin B (VERB) by closing the bisfuran ring of aflatoxin which is required for DNA-binding, thus giving to aflatoxin its activity as a mutagen. Then, the activity of the versicolorin B desaturase aflL leads to versicolorin A (VERA). A branch point starts from VERB since it can also be converted to dihydrodemethylsterigmatocystin (DMDHST), probably also by aflL, VERA being a precursor for aflatoxins B1 and G1, and DMDHST for aflatoxins B2 and G2. Next, the versicolorin reductase aflM and the cytochrome P450 monooxygenase aflN are involved in conversion of VERA to demethylsterigmatocystin (DMST). AflX and aflY seem also involved in this step, through probable aflX-mediated epoxide ring-opening step following versicolorin A oxidation and aflY-mediated Baeyer-Villiger oxidation required for the formation of the xanthone ring. The methyltransferase aflO then leads to the modification of DMST to sterigmatocystin (ST), and of DMDHST to dihydrosterigmatocystin (DHST). Both ST and DHST are then substrates of the O-methyltransferase aflP to yield O-methylsterigmatocystin (OMST) and dihydro-O-methylsterigmatocystin (DHOMST), respectively. Finally OMST is converted to aflatoxins B1 and G1, and DHOMST to aflatoxins B2 and G2, via the action of several enzymes including O-methylsterigmatocystin oxidoreductase aflQ, the cytochrome P450 monooxygenase aflU, but also the NADH-dependent flavin oxidoreductase nadA which is specifically required for the synthesis of AFG1. The polypeptide is Cytochrome P450 monooxygenase aflU (Aspergillus parasiticus (strain ATCC 56775 / NRRL 5862 / SRRC 143 / SU-1)).